Consider the following 290-residue polypeptide: Metallo-beta-lactamase L1 type 3 (290 aa).

The signal sequence occupies residues 1 to 21; the sequence is MRSTLLAFALAVALPAAHTSA. Residues 22–33 constitute a propeptide that is removed on maturation; sequence AEVPLPQLRAYT. Zn(2+) is bound by residues H105, H107, D109, H110, and H181. D205 provides a ligand contact to substrate. C239 and C267 are oxidised to a cystine. Residue H246 coordinates Zn(2+).

The protein belongs to the metallo-beta-lactamase superfamily. Class-B beta-lactamase family. In terms of assembly, homotetramer. Zn(2+) serves as cofactor.

Its subcellular location is the periplasm. The catalysed reaction is a beta-lactam + H2O = a substituted beta-amino acid. With respect to regulation, inhibited by Hg(2+) or Cu(2+), and by chelating agents such as EDTA and O-phenanthroline. Reduced enzymatic activity in presence of cobalt, nickel, cadmium, and manganese. In terms of biological role, confers resistance to the different beta-lactams antibiotics (penicillin, cephalosporin and carbapenem) via the hydrolysis of the beta-lactam ring. The polypeptide is Metallo-beta-lactamase L1 type 3 (Stenotrophomonas maltophilia (Pseudomonas maltophilia)).